Here is a 360-residue protein sequence, read N- to C-terminus: Epoxide hydrolase 3 (360 aa).

A helical membrane pass occupies residues 22 to 42 (AFMWSLVFSVALVAAAVYGCI). Catalysis depends on Asp-173, which acts as the Nucleophile. The Proton donor role is filled by Tyr-281. The active-site Proton acceptor is His-337.

It belongs to the AB hydrolase superfamily. Epoxide hydrolase family.

The protein resides in the microsome membrane. It catalyses the reaction an epoxide + H2O = an ethanediol. It carries out the reaction 9,10-epoxyoctadecanoate + H2O = 9,10-dihydroxyoctadecanoate. The enzyme catalyses 9,10-epoxy-(12Z)-octadecenoate + H2O = 9,10-dihydroxy-(12Z)-octadecenoate. The catalysed reaction is 8,9-epoxy-(5Z,11Z,14Z)-eicosatrienoate + H2O = 8,9-dihydroxy-(5Z,11Z,14Z)-eicosatrienoate. It catalyses the reaction 11,12-epoxy-(5Z,8Z,14Z)-eicosatrienoate + H2O = 11,12-dihydroxy-(5Z,8Z,14Z)-eicosatrienoate. It carries out the reaction 14,15-epoxy-(5Z,8Z,11Z)-eicosatrienoate + H2O = 14,15-dihydroxy-(5Z,8Z,11Z)-eicosatrienoate. Inhibited by 1-(1-acetylpiperidin-4-yl)-3-(4-(trifl uoromethoxy)phenyl)urea (TPAU), 1-cyclohexyl-3-dodecylurea (CDU), 12-(3-adamantan-1-yl-ureido)-dodecanoic acid (AUDA), 1-((3S, 5S, 7S)-adamantan-1-yl)-3-(5-(2-(2-ethoxyethoxy) ethoxy)pentyl)urea (AEPU) and to a lesser extent by 8-(3-((3S, 5S, 7S)-adamantan-1-yl)ureido) octanoic acid (AUOA). Functionally, catalyzes the hydrolysis of epoxide-containing fatty acids. Active in vitro against epoxyeicosatrienoic acids (EETs) including 8,9-EET, 9,10-EET, 11,12-EET and 14,15-EET and leukotoxin. The protein is Epoxide hydrolase 3 (EPHX3) of Homo sapiens (Human).